A 206-amino-acid polypeptide reads, in one-letter code: MMQESVLAQLDVSRETSEKLSHFVALVEKWNKAVNLIGRSTVDSIWTRHVLDSAQLRTHLTSQPRLWLDLGSGSGFPGIVVAIMAADESPESRFVLVESDQRKATFLRTACRELKLSAAVLAARIESLPPQKADVISARALAALPDLCALAAPHLAPNGICLFPKGVGHISEIAAARQSWNMEMETLPSLTDPDAVILKLKALAHV.

S-adenosyl-L-methionine-binding positions include G71, F76, 125 to 126 (IE), and R139.

This sequence belongs to the methyltransferase superfamily. RNA methyltransferase RsmG family.

The protein resides in the cytoplasm. The catalysed reaction is guanosine(527) in 16S rRNA + S-adenosyl-L-methionine = N(7)-methylguanosine(527) in 16S rRNA + S-adenosyl-L-homocysteine. Its function is as follows. Specifically methylates the N7 position of guanine in position 527 of 16S rRNA. This chain is Ribosomal RNA small subunit methyltransferase G, found in Cereibacter sphaeroides (strain ATCC 17029 / ATH 2.4.9) (Rhodobacter sphaeroides).